The chain runs to 361 residues: Phospho-N-acetylmuramoyl-pentapeptide-transferase (361 aa).

Transmembrane regions (helical) follow at residues 28-48, 74-94, 99-119, 133-153, 168-188, 203-223, 236-256, 263-283, 288-308, and 338-358; these read LAIIITLSISFVTGPILIKFL, TMGGIMIILSSCLSTLLLADL, IWITLFGFISFGIIGFMDDYA, SKFLLQGIISLIIYVLLEYLD, LSLDLNYFYMVFAIFVIVGSS, VPIAFTAGSFALISYLVGNLI, TGELTVLCAGLVGSCLGFLWF, VFMGDTGSLSLGGVLGIISVI, IVLAIIGGLFVIETTSVILQV, and KVVIRFWIISVIFSLIGLSSL.

This sequence belongs to the glycosyltransferase 4 family. MraY subfamily. It depends on Mg(2+) as a cofactor.

It is found in the cell inner membrane. It carries out the reaction UDP-N-acetyl-alpha-D-muramoyl-L-alanyl-gamma-D-glutamyl-meso-2,6-diaminopimeloyl-D-alanyl-D-alanine + di-trans,octa-cis-undecaprenyl phosphate = di-trans,octa-cis-undecaprenyl diphospho-N-acetyl-alpha-D-muramoyl-L-alanyl-D-glutamyl-meso-2,6-diaminopimeloyl-D-alanyl-D-alanine + UMP. It participates in cell wall biogenesis; peptidoglycan biosynthesis. Functionally, catalyzes the initial step of the lipid cycle reactions in the biosynthesis of the cell wall peptidoglycan: transfers peptidoglycan precursor phospho-MurNAc-pentapeptide from UDP-MurNAc-pentapeptide onto the lipid carrier undecaprenyl phosphate, yielding undecaprenyl-pyrophosphoryl-MurNAc-pentapeptide, known as lipid I. In Rickettsia prowazekii (strain Madrid E), this protein is Phospho-N-acetylmuramoyl-pentapeptide-transferase.